A 648-amino-acid chain; its full sequence is DNA ligase (648 aa).

NAD(+)-binding positions include 63 to 67 and 105 to 106; these read DILYD and ST. Lys-143 acts as the N6-AMP-lysine intermediate in catalysis. Residues Arg-159, Glu-190, and Lys-302 each coordinate NAD(+). Zn(2+) contacts are provided by Cys-390, Cys-393, Cys-406, and Cys-412. Residues 570–648 form the BRCT domain; it reads SLASPLTGKI…SEQEYLDLIS (79 aa).

This sequence belongs to the NAD-dependent DNA ligase family. LigA subfamily. It depends on Mg(2+) as a cofactor. Requires Mn(2+) as cofactor.

It carries out the reaction NAD(+) + (deoxyribonucleotide)n-3'-hydroxyl + 5'-phospho-(deoxyribonucleotide)m = (deoxyribonucleotide)n+m + AMP + beta-nicotinamide D-nucleotide.. Functionally, DNA ligase that catalyzes the formation of phosphodiester linkages between 5'-phosphoryl and 3'-hydroxyl groups in double-stranded DNA using NAD as a coenzyme and as the energy source for the reaction. It is essential for DNA replication and repair of damaged DNA. This Shewanella baltica (strain OS155 / ATCC BAA-1091) protein is DNA ligase.